We begin with the raw amino-acid sequence, 1220 residues long: Myosin-2 (1220 aa).

Polar residues predominate over residues 1–12; the sequence is MMLSASPNTLAK. Disordered regions lie at residues 1–54 and 68–95; these read MMLS…ARRS and QNGS…RKEK. Over residues 20 to 33 the composition is skewed to basic and acidic residues; that stretch reads ESLRQKDECDRPKD. Low complexity predominate over residues 40-54; that stretch reads SRPNSRARLPSARRS. Over residues 82-95 the composition is skewed to basic and acidic residues; sequence ESERKEEGVKRKEK. A Myosin N-terminal SH3-like domain is found at 160-209; the sequence is KKKLRVWCRVSNGQWQLGKIQSTSADTSLVMLSTANVVKVSTEELFPANP. The 667-residue stretch at 213–879 folds into the Myosin motor domain; it reads EGVEDLIQLS…QIGIFEDRRK (667 aa). Residues 304–311 and 353–361 each bind ATP; these read GESGAGKT and NANSSRFGK. 2 actin-binding regions span residues 638-672 and 759-781; these read LIEK…KQHL and LFKL…KPNS. 3 IQ domains span residues 881 to 910, 904 to 933, and 942 to 971; these read VLQG…VTLV, MRKV…FHAD, and ELSA…QKEL. Disordered regions lie at residues 968–1007 and 1075–1118; these read QKEL…MSDL and SITG…NGNT. 2 stretches are compositionally biased toward polar residues: residues 997 to 1006 and 1098 to 1118; these read PQVQPTSMSD and TMST…NGNT. Positions 1003 to 1071 form a coiled coil; that stretch reads SMSDLQKRIL…MSLAAARKSL (69 aa).

This sequence belongs to the TRAFAC class myosin-kinesin ATPase superfamily. Myosin family. Plant myosin class VIII subfamily. As to quaternary structure, homodimer. As to expression, expressed in flowers, leaves and roots.

The protein localises to the cell junction. It localises to the plasmodesma. The protein resides in the endosome. Functionally, myosin heavy chain that is required for the cell cycle-regulated transport of various organelles and proteins for their segregation. Functions by binding with its tail domain to receptor proteins on organelles and exerting force with its N-terminal motor domain against actin filaments, thereby transporting its cargo along polarized actin cables. Involved in endocytosis via its action in endosomal trafficking. This Arabidopsis thaliana (Mouse-ear cress) protein is Myosin-2 (VIII-2).